Here is a 249-residue protein sequence, read N- to C-terminus: Probable endopeptidase YafL (249 aa).

A signal peptide spans 1–17; sequence MSLPSIPSFVLSGLLLI. A lipid anchor (N-palmitoyl cysteine) is attached at C18. The S-diacylglycerol cysteine moiety is linked to residue C18. One can recognise a NlpC/P60 domain in the interval 116–243; the sequence is HNITEVAIHR…DHFLGARRIL (128 aa). C147 functions as the Nucleophile in the catalytic mechanism. The Proton acceptor role is filled by H202. The active site involves E214.

This sequence belongs to the peptidase C40 family.

It localises to the cell membrane. The polypeptide is Probable endopeptidase YafL (yafL) (Escherichia coli (strain K12)).